We begin with the raw amino-acid sequence, 176 residues long: Ribosome maturation factor RimM (176 aa).

One can recognise a PRC barrel domain in the interval 97–176 (EDEFYWRDLI…QILVDWDPDF (80 aa)).

The protein belongs to the RimM family. As to quaternary structure, binds ribosomal protein uS19.

The protein localises to the cytoplasm. Functionally, an accessory protein needed during the final step in the assembly of 30S ribosomal subunit, possibly for assembly of the head region. Essential for efficient processing of 16S rRNA. May be needed both before and after RbfA during the maturation of 16S rRNA. It has affinity for free ribosomal 30S subunits but not for 70S ribosomes. This chain is Ribosome maturation factor RimM, found in Shewanella sp. (strain MR-4).